Consider the following 343-residue polypeptide: Malate dehydrogenase, peroxisomal (343 aa).

NAD(+)-binding positions include 8–14 (GASGGVG) and Asp34. Substrate contacts are provided by Arg80 and Arg86. Residues Asn93 and 116–118 (ISN) each bind NAD(+). Asn118 and Arg152 together coordinate substrate. Residue His187 is the Proton acceptor of the active site. An NAD(+)-binding site is contributed by Met237.

Belongs to the LDH/MDH superfamily. MDH type 1 family. In terms of assembly, homodimer.

The protein resides in the peroxisome. The catalysed reaction is (S)-malate + NAD(+) = oxaloacetate + NADH + H(+). The protein is Malate dehydrogenase, peroxisomal (MDH3) of Saccharomyces cerevisiae (strain ATCC 204508 / S288c) (Baker's yeast).